Consider the following 70-residue polypeptide: Large ribosomal subunit protein bL31 (70 aa).

4 residues coordinate Zn(2+): C16, C18, C37, and C40.

The protein belongs to the bacterial ribosomal protein bL31 family. Type A subfamily. As to quaternary structure, part of the 50S ribosomal subunit. Zn(2+) is required as a cofactor.

In terms of biological role, binds the 23S rRNA. The protein is Large ribosomal subunit protein bL31 of Desulfovibrio desulfuricans (strain ATCC 27774 / DSM 6949 / MB).